Consider the following 252-residue polypeptide: Triosephosphate isomerase (252 aa).

10 to 12 (NWK) lines the substrate pocket. Residue H96 is the Electrophile of the active site. Residue E168 is the Proton acceptor of the active site. Residues G174, S214, and 235–236 (GG) each bind substrate.

The protein belongs to the triosephosphate isomerase family. As to quaternary structure, homodimer.

The protein localises to the cytoplasm. It carries out the reaction D-glyceraldehyde 3-phosphate = dihydroxyacetone phosphate. Its pathway is carbohydrate biosynthesis; gluconeogenesis. The protein operates within carbohydrate degradation; glycolysis; D-glyceraldehyde 3-phosphate from glycerone phosphate: step 1/1. Functionally, involved in the gluconeogenesis. Catalyzes stereospecifically the conversion of dihydroxyacetone phosphate (DHAP) to D-glyceraldehyde-3-phosphate (G3P). The protein is Triosephosphate isomerase of Lactococcus lactis subsp. cremoris (strain MG1363).